The following is an 80-amino-acid chain: Clavaspirin (80 aa).

The signal sequence occupies residues 1-17 (MKTIILILLILGLGIDA). The propeptide occupies 18–29 (KSLEESKADEEK). L52 is modified (leucine amide). Residues 53–80 (GDDQQDNGKFYGYYAEDNGKHWYDTGDQ) constitute a propeptide that is removed on maturation.

As to expression, pharyngeal tissues and hemocytes.

It is found in the secreted. Functionally, exhibits broad-spectrum antimicrobial activity against both Gram-positive and Gram-negative bacteria. Has potent hemolytic activity. The sequence is that of Clavaspirin from Styela clava (Sea squirt).